The chain runs to 171 residues: MAELDIQISVEDIGWPGEETLLSFCERVLGAAAVYLRDSEKQPFPTMAPEVSLVFTDDASIQDINAEWRGKDKATNVLSFPAFPVQPGKMPGPMLGDIIIARETLEREAAELEKSFDDHLTHLLVHGFLHLLGYDHMNSAEAEIMEGLETRILAQLGLSDPYEGQDLKMEP.

Residues His-126, His-130, and His-136 each contribute to the Zn(2+) site.

Belongs to the endoribonuclease YbeY family. Zn(2+) serves as cofactor.

The protein localises to the cytoplasm. In terms of biological role, single strand-specific metallo-endoribonuclease involved in late-stage 70S ribosome quality control and in maturation of the 3' terminus of the 16S rRNA. The sequence is that of Endoribonuclease YbeY from Rhizobium johnstonii (strain DSM 114642 / LMG 32736 / 3841) (Rhizobium leguminosarum bv. viciae).